The primary structure comprises 169 residues: Chorismate pyruvate-lyase (169 aa).

Residues Met37, Arg79, Leu117, and Glu158 each contribute to the substrate site.

The protein belongs to the UbiC family. As to quaternary structure, monomer.

Its subcellular location is the cytoplasm. It carries out the reaction chorismate = 4-hydroxybenzoate + pyruvate. It functions in the pathway cofactor biosynthesis; ubiquinone biosynthesis. Its function is as follows. Removes the pyruvyl group from chorismate, with concomitant aromatization of the ring, to provide 4-hydroxybenzoate (4HB) for the ubiquinone pathway. The chain is Chorismate pyruvate-lyase from Proteus mirabilis (strain HI4320).